The chain runs to 360 residues: Snurportin-1 (360 aa).

M1 bears the N-acetylmethionine mark. The tract at residues 1 to 42 (MEELSQALASSFSVSQDLNSTAAPHPRLSQYKSKYSSLEQSE) is disordered. The tract at residues 1 to 65 (MEELSQALAS…LDYVNHARRL (65 aa)) is necessary for interaction with KPNB1 and m3G-cap U1 and U5 snRNP import receptor activity. The tract at residues 1–159 (MEELSQALAS…NRFSSLLPGG (159 aa)) is necessary for interaction with XPO1. Over residues 7–22 (ALASSFSVSQDLNSTA) the composition is skewed to polar residues. In terms of domain architecture, IBB spans 11–73 (SFSVSQDLNS…RLAEDDWTGM (63 aa)). A Phosphoserine modification is found at S75. The interaction with m3G-cap structure stretch occupies residues 127-129 (GKR). The segment at 208–328 (MHSKLPEEEG…GMKEKLTHKA (121 aa)) is necessary for binding to the m3G-cap structure. Positions 339–360 (LSTPKLKGSSHSPDHPGCLMEN) are disordered. The residue at position 350 (S350) is a Phosphoserine.

The protein belongs to the snurportin family. In terms of assembly, component of an import snRNP complex composed of KPNB1, SNUPN, SMN1 and ZNF259. Component of a nuclear export receptor complex composed of KPNB1, Ran, SNUPN and XPO1. Found in a trimeric export complex with SNUPN, Ran and XPO1. Interacts (via IBB domain) with KPNB1; the interaction is direct. Interacts with DDX20, IPO7, SMN1, SNRPB and XPO1. Interacts directly with XPO1. Its interaction with XPO1 and binding to m3G-cap U snRNPs appears to be mutually exclusive. Can form homomers.

Its subcellular location is the nucleus. The protein resides in the cytoplasm. Its function is as follows. Functions as an U snRNP-specific nuclear import adapter. Involved in the trimethylguanosine (m3G)-cap-dependent nuclear import of U snRNPs. Binds specifically to the terminal m3G-cap U snRNAs. The protein is Snurportin-1 (SNUPN) of Homo sapiens (Human).